The primary structure comprises 1075 residues: DNA-directed RNA polymerase subunit beta (1075 aa).

The protein belongs to the RNA polymerase beta chain family. As to quaternary structure, in plastids the minimal PEP RNA polymerase catalytic core is composed of four subunits: alpha, beta, beta', and beta''. When a (nuclear-encoded) sigma factor is associated with the core the holoenzyme is formed, which can initiate transcription.

It localises to the plastid. It is found in the chloroplast. It carries out the reaction RNA(n) + a ribonucleoside 5'-triphosphate = RNA(n+1) + diphosphate. Functionally, DNA-dependent RNA polymerase catalyzes the transcription of DNA into RNA using the four ribonucleoside triphosphates as substrates. The polypeptide is DNA-directed RNA polymerase subunit beta (Zea mays (Maize)).